A 1456-amino-acid polypeptide reads, in one-letter code: DNA polymerase gamma, mitochondrial (1456 aa).

The N-terminal 41 residues, 1–41, are a transit peptide targeting the mitochondrion; sequence MLTPVRCRTVPNATVATAARVLRRANLFSRYPRQLGHLRWD. Disordered stretches follow at residues 1200–1266 and 1308–1443; these read APEM…SLDD and AVTT…SWKP. A compositionally biased stretch (low complexity) spans 1204–1239; it reads AAVPSTSSESKSKASATTSTTTTENATASPSSSSNV. Residues 1315–1325 are compositionally biased toward pro residues; the sequence is PEPPTNPPPVA. Composition is skewed to low complexity over residues 1346–1371 and 1411–1428; these read PKNP…TPKP and TASV…ATAT.

This sequence belongs to the DNA polymerase type-A family. It depends on Mg(2+) as a cofactor.

The protein localises to the mitochondrion. The catalysed reaction is DNA(n) + a 2'-deoxyribonucleoside 5'-triphosphate = DNA(n+1) + diphosphate. Functionally, involved in the replication of mitochondrial DNA. The protein is DNA polymerase gamma, mitochondrial (mip-1) of Neurospora crassa (strain ATCC 24698 / 74-OR23-1A / CBS 708.71 / DSM 1257 / FGSC 987).